A 306-amino-acid polypeptide reads, in one-letter code: Tryptophan 2,3-dioxygenase (306 aa).

Residues 1-33 (MQPPGDDAAPRCPFAGAHAPDAPHVPEAAGDDA) are disordered. Residues 75-79 (FIIQH), Y137, and R141 each bind substrate. H264 contacts heme. T278 contributes to the substrate binding site.

Belongs to the tryptophan 2,3-dioxygenase family. Homotetramer. The cofactor is heme.

It carries out the reaction L-tryptophan + O2 = N-formyl-L-kynurenine. Its pathway is amino-acid degradation; L-tryptophan degradation via kynurenine pathway; L-kynurenine from L-tryptophan: step 1/2. Heme-dependent dioxygenase that catalyzes the oxidative cleavage of the L-tryptophan (L-Trp) pyrrole ring and converts L-tryptophan to N-formyl-L-kynurenine. Catalyzes the oxidative cleavage of the indole moiety. The chain is Tryptophan 2,3-dioxygenase from Burkholderia pseudomallei (strain 668).